The primary structure comprises 214 residues: Rho-related GTP-binding protein RhoJ (214 aa).

2 S-palmitoyl cysteine lipidation sites follow: Cys-3 and Cys-11. GTP contacts are provided by residues Ala-31–Cys-36, Phe-46–Thr-53, Asp-75–Gln-79, Thr-133–Asp-136, and Ala-177–Leu-178. Residues Tyr-50 to Tyr-58 carry the Effector region motif. At Cys-211 the chain carries Cysteine methyl ester. A lipid anchor (S-farnesyl cysteine) is attached at Cys-211. A propeptide spans Ala-212–Ile-214 (removed in mature form).

It belongs to the small GTPase superfamily. Rho family. Interacts with the CRIB domains of proteins such as Pak1 and Was/Wasp. Interacts with GLUL. Post-translationally, palmitoylated; regulates localization to the plasma membrane and may be mediated by GLUL. As to expression, highly expressed in heart with moderate levels in lung and liver. Very low levels detected in brain, spleen, skeletal muscle, kidney and testis.

Its subcellular location is the cell membrane. Functionally, plasma membrane-associated small GTPase specifically involved in angiogenesis. Required for endothelial cell migration during vascular development via its interaction with GLUL. Elicits the formation of F-actin-rich structures, thereby regulating endothelial cell migration. The sequence is that of Rho-related GTP-binding protein RhoJ (Rhoj) from Mus musculus (Mouse).